The following is a 59-amino-acid chain: MAVQQNKKSPSKRGMHRSHDALTAPALSVDSTTGEVHRPHHISPNGMYRGRKVVKAKGE.

Positions 1-59 are disordered; the sequence is MAVQQNKKSPSKRGMHRSHDALTAPALSVDSTTGEVHRPHHISPNGMYRGRKVVKAKGE. A compositionally biased stretch (basic residues) spans 49–59; it reads RGRKVVKAKGE.

This sequence belongs to the bacterial ribosomal protein bL32 family.

The chain is Large ribosomal subunit protein bL32 (rpmF) from Neisseria meningitidis serogroup B (strain ATCC BAA-335 / MC58).